Consider the following 242-residue polypeptide: Ribonuclease 3 (242 aa).

The RNase III domain occupies 10–146 (LQNFNKKFAD…FVGALYLDQG (137 aa)). E59 lines the Mg(2+) pocket. D63 is an active-site residue. 2 residues coordinate Mg(2+): D132 and E135. The active site involves E135. In terms of domain architecture, DRBM spans 172-241 (DFKTQFQELI…AEKAYNDMKK (70 aa)). The disordered stretch occupies residues 216-242 (VAKGQGRTKKESEQKAAEKAYNDMKKK). Basic and acidic residues predominate over residues 223–242 (TKKESEQKAAEKAYNDMKKK).

This sequence belongs to the ribonuclease III family. As to quaternary structure, homodimer. It depends on Mg(2+) as a cofactor.

The protein resides in the cytoplasm. It carries out the reaction Endonucleolytic cleavage to 5'-phosphomonoester.. In terms of biological role, digests double-stranded RNA. Involved in the processing of primary rRNA transcript to yield the immediate precursors to the large and small rRNAs (23S and 16S). Processes some mRNAs, and tRNAs when they are encoded in the rRNA operon. Processes pre-crRNA and tracrRNA of type II CRISPR loci if present in the organism. The sequence is that of Ribonuclease 3 from Staphylococcus carnosus (strain TM300).